A 606-amino-acid chain; its full sequence is Phosphogluconate dehydratase (606 aa).

Residues C156 and C223 each contribute to the [4Fe-4S] cluster site.

It belongs to the IlvD/Edd family. The cofactor is [4Fe-4S] cluster.

The enzyme catalyses 6-phospho-D-gluconate = 2-dehydro-3-deoxy-6-phospho-D-gluconate + H2O. The protein operates within carbohydrate metabolism; Entner-Doudoroff pathway. In terms of biological role, catalyzes the dehydration of 6-phospho-D-gluconate to 2-dehydro-3-deoxy-6-phospho-D-gluconate. The protein is Phosphogluconate dehydratase of Rhizobium meliloti (strain 1021) (Ensifer meliloti).